The following is a 145-amino-acid chain: 3-dehydroquinate dehydratase (145 aa).

Catalysis depends on Tyr24, which acts as the Proton acceptor. Asn75, His81, and Asp88 together coordinate substrate. His101 serves as the catalytic Proton donor. Substrate is bound by residues 102 to 103 (IS) and Arg112.

The protein belongs to the type-II 3-dehydroquinase family. As to quaternary structure, homododecamer.

It carries out the reaction 3-dehydroquinate = 3-dehydroshikimate + H2O. The protein operates within metabolic intermediate biosynthesis; chorismate biosynthesis; chorismate from D-erythrose 4-phosphate and phosphoenolpyruvate: step 3/7. In terms of biological role, catalyzes a trans-dehydration via an enolate intermediate. The protein is 3-dehydroquinate dehydratase of Rhizobium etli (strain CIAT 652).